A 350-amino-acid polypeptide reads, in one-letter code: Ketol-acid reductoisomerase (NADP(+)) (350 aa).

In terms of domain architecture, KARI N-terminal Rossmann spans 3–183 (AQIWYEDDGD…GALRAGAIKT (181 aa)). NADP(+) is bound by residues 26–29 (YGSQ), Arg49, Ser52, Ser54, and 84–87 (DQYQ). His109 is an active-site residue. Gly135 is an NADP(+) binding site. The region spanning 184–327 (TFKEETETDL…PKLRAMFSWN (144 aa)) is the KARI C-terminal knotted domain. Mg(2+)-binding residues include Asp192, Glu196, Glu228, and Glu232. Ser253 is a binding site for substrate.

It belongs to the ketol-acid reductoisomerase family. Mg(2+) is required as a cofactor.

It carries out the reaction (2R)-2,3-dihydroxy-3-methylbutanoate + NADP(+) = (2S)-2-acetolactate + NADPH + H(+). The catalysed reaction is (2R,3R)-2,3-dihydroxy-3-methylpentanoate + NADP(+) = (S)-2-ethyl-2-hydroxy-3-oxobutanoate + NADPH + H(+). It participates in amino-acid biosynthesis; L-isoleucine biosynthesis; L-isoleucine from 2-oxobutanoate: step 2/4. The protein operates within amino-acid biosynthesis; L-valine biosynthesis; L-valine from pyruvate: step 2/4. Involved in the biosynthesis of branched-chain amino acids (BCAA). Catalyzes an alkyl-migration followed by a ketol-acid reduction of (S)-2-acetolactate (S2AL) to yield (R)-2,3-dihydroxy-isovalerate. In the isomerase reaction, S2AL is rearranged via a Mg-dependent methyl migration to produce 3-hydroxy-3-methyl-2-ketobutyrate (HMKB). In the reductase reaction, this 2-ketoacid undergoes a metal-dependent reduction by NADPH to yield (R)-2,3-dihydroxy-isovalerate. The protein is Ketol-acid reductoisomerase (NADP(+)) of Bifidobacterium animalis subsp. lactis (strain AD011).